The primary structure comprises 481 residues: Glutamate--glyoxylate aminotransferase 2 (481 aa).

Residue Lys291 is modified to N6-(pyridoxal phosphate)lysine. A Peroxisomal targeting signal motif is present at residues 479-481 (SRM).

The protein belongs to the class-I pyridoxal-phosphate-dependent aminotransferase family. Alanine aminotransferase subfamily. Homodimer. It depends on pyridoxal 5'-phosphate as a cofactor. Post-translationally, the N-terminus is blocked. In terms of tissue distribution, expressed at low levels in seedlings, leaves, flowers, roots, and green siliques.

It localises to the peroxisome. The enzyme catalyses L-alanine + 2-oxoglutarate = pyruvate + L-glutamate. It catalyses the reaction glyoxylate + L-alanine = glycine + pyruvate. The catalysed reaction is glycine + 2-oxoglutarate = glyoxylate + L-glutamate. Its pathway is photosynthesis; C4 acid pathway. It participates in amino-acid degradation; L-alanine degradation via transaminase pathway; pyruvate from L-alanine: step 1/1. Functionally, catalyzes the Glu:glyoxylate aminotransferase (GGT), Ala:glyoxylate aminotransferase (AGT), Ala:2-oxoglutarate aminotransferase (AKT) and Glu:pyruvate aminotransferase (GPT) reactions in peroxisomes. The polypeptide is Glutamate--glyoxylate aminotransferase 2 (GGAT2) (Arabidopsis thaliana (Mouse-ear cress)).